We begin with the raw amino-acid sequence, 1551 residues long: UDP-glucose:glycoprotein glucosyltransferase 1 (1551 aa).

Positions M1–A42 are cleaved as a signal peptide. Residues N269, N536, N1015, and N1228 are each glycosylated (N-linked (GlcNAc...) asparagine). The tract at residues K1244–L1551 is glucosyltransferase. Phosphoserine is present on S1277. Residues K1531–L1551 are disordered. A Prevents secretion from ER motif is present at residues H1548–L1551.

The protein belongs to the glycosyltransferase 8 family. In terms of assembly, monomer as well as in a tight complex with SELENOF. Interacts with METTL23. Part of a large chaperone multiprotein complex comprising DNAJB11, HSP90B1, HSPA5, HYOU, PDIA2, PDIA4, PDIA6, PPIB, SDF2L1, UGGT1 and very small amounts of ERP29, but not, or at very low levels, CALR nor CANX. Requires Ca(2+) as cofactor.

The protein localises to the endoplasmic reticulum lumen. It is found in the endoplasmic reticulum-Golgi intermediate compartment. The enzyme catalyses N(4)-(alpha-D-Man-(1-&gt;2)-alpha-D-Man-(1-&gt;2)-alpha-D-Man-(1-&gt;3)-[alpha-D-Man-(1-&gt;2)-alpha-D-Man-(1-&gt;3)-[alpha-D-Man-(1-&gt;2)-alpha-D-Man-(1-&gt;6)]-alpha-D-Man-(1-&gt;6)]-beta-D-Man-(1-&gt;4)-beta-D-GlcNAc-(1-&gt;4)-beta-D-GlcNAc)-L-asparaginyl-[protein] (N-glucan mannose isomer 9A1,2,3B1,2,3) + UDP-alpha-D-glucose = N(4)-(alpha-D-Glc-(1-&gt;3)-alpha-D-Man-(1-&gt;2)-alpha-D-Man-(1-&gt;2)-alpha-D-Man-(1-&gt;3)-[alpha-D-Man-(1-&gt;2)-alpha-D-Man-(1-&gt;3)-[alpha-D-Man-(1-&gt;2)-alpha-D-Man-(1-&gt;6)]-alpha-D-Man-(1-&gt;6)]-beta-D-Man-(1-&gt;4)-beta-D-GlcNAc-(1-&gt;4)-beta-D-GlcNAc)-L-asparaginyl-[protein] + UDP + H(+). It functions in the pathway protein modification; protein glycosylation. Functionally, recognizes glycoproteins with minor folding defects. Reglucosylates single N-glycans near the misfolded part of the protein, thus providing quality control for protein folding in the endoplasmic reticulum. Reglucosylated proteins are recognized by calreticulin for recycling to the endoplasmic reticulum and refolding or degradation. This Rattus norvegicus (Rat) protein is UDP-glucose:glycoprotein glucosyltransferase 1 (Uggt1).